The primary structure comprises 216 residues: Pentapeptide repeat protein VPA0095 (216 aa).

It belongs to the pentapeptide repeat protein family.

Functionally, has no effect when overexpressed in E.coli. When Cys-115 is mutated to Tyr and overexpressed it increases (fluoro)quinolone resistance in E.coli up to 16-fold for ciprofloxacin, levofloxacin and nalidixic acid. The protein is Pentapeptide repeat protein VPA0095 of Vibrio parahaemolyticus serotype O3:K6 (strain RIMD 2210633).